The primary structure comprises 267 residues: Small ribosomal subunit protein uS2 (267 aa).

The interval G224–K267 is disordered. Positions R225 to A251 are enriched in basic and acidic residues.

It belongs to the universal ribosomal protein uS2 family.

The chain is Small ribosomal subunit protein uS2 from Levilactobacillus brevis (strain ATCC 367 / BCRC 12310 / CIP 105137 / JCM 1170 / LMG 11437 / NCIMB 947 / NCTC 947) (Lactobacillus brevis).